The sequence spans 278 residues: MAYNYRFAILLVLLSATVGFTAAALKPPVRTLNGNITLNLIWYGKFTPIQRSIIVDFIRSISSVTAAKGPSVASWWKTTEKYKTGVSTLVVGKQLLLENYPLGKSLKSPYLRALSSKLNAGGARSITVVLTAKDVTVEGLCMNRCGTHGSKSSSVNSGAYVWVGNSETQCPGYCAWPFHQPIYGPQSPPLVAPNGDVGVDGMIINIATLLVNTVTNPSPEAVSACTGIFGSGAYPGYAGRVLVDKTSGASYNALGLAGRKYLLPALWDPQTSTCKTMV.

The N-terminal stretch at 1-23 (MAYNYRFAILLVLLSATVGFTAA) is a signal peptide. An N-linked (GlcNAc...) asparagine glycan is attached at N35.

Belongs to the EXORDIUM family.

It localises to the secreted. The protein localises to the extracellular space. The protein resides in the apoplast. In terms of biological role, may play a role in a brassinosteroid-dependent regulation of growth and development. This Arabidopsis thaliana (Mouse-ear cress) protein is Protein EXORDIUM-like 4 (EXL4).